Consider the following 157-residue polypeptide: Large ribosomal subunit protein uL15 (157 aa).

This sequence belongs to the universal ribosomal protein uL15 family. Part of the 50S ribosomal subunit.

Functionally, binds to the 23S rRNA. This is Large ribosomal subunit protein uL15 from Ehrlichia ruminantium (strain Welgevonden).